We begin with the raw amino-acid sequence, 324 residues long: MKKEDLRIVYMGTPDFAVESLRALVEGGYNVVGVITMPDKPMGRHGSVLQPSAVKQYAVSVGLPVLQPEKLKDEAFLEELRALRADLQIVVAFRMLPEVVWNMPRLGTFNLHASLLPQYRGAAPINWAVINGDTETGVTTFFLTHEIDTGKIIRQRHLPIADTDDVETVHDALMAMGARLVTETVDLLLDGKTDAIPQEEFYKDAAELRPAPKIFKDTCHIDWNQPVKNIYDFVRGLSPYPAAWTELISEDGKRLALKIYQAEKRPAEHNFPVGSIHTDHKSYIDVAVKDGFLRLRSLQLAGKKRMNITDFLNGFKQIAEYTVG.

Position 114-117 (114-117) interacts with (6S)-5,6,7,8-tetrahydrofolate; it reads SLLP.

It belongs to the Fmt family.

The catalysed reaction is L-methionyl-tRNA(fMet) + (6R)-10-formyltetrahydrofolate = N-formyl-L-methionyl-tRNA(fMet) + (6S)-5,6,7,8-tetrahydrofolate + H(+). Its function is as follows. Attaches a formyl group to the free amino group of methionyl-tRNA(fMet). The formyl group appears to play a dual role in the initiator identity of N-formylmethionyl-tRNA by promoting its recognition by IF2 and preventing the misappropriation of this tRNA by the elongation apparatus. This chain is Methionyl-tRNA formyltransferase, found in Parabacteroides distasonis (strain ATCC 8503 / DSM 20701 / CIP 104284 / JCM 5825 / NCTC 11152).